Reading from the N-terminus, the 226-residue chain is Cytidylate kinase (226 aa).

10–18 (GPAGAGKST) contacts ATP.

Belongs to the cytidylate kinase family. Type 1 subfamily.

The protein localises to the cytoplasm. It catalyses the reaction CMP + ATP = CDP + ADP. It carries out the reaction dCMP + ATP = dCDP + ADP. The polypeptide is Cytidylate kinase (Caldicellulosiruptor saccharolyticus (strain ATCC 43494 / DSM 8903 / Tp8T 6331)).